Reading from the N-terminus, the 370-residue chain is tRNA-specific 2-thiouridylase MnmA (370 aa).

ATP contacts are provided by residues 9 to 16 (GISGGVDS) and Met-35. The interaction with target base in tRNA stretch occupies residues 107–109 (NPD). Cys-112 acts as the Nucleophile in catalysis. A disulfide bond links Cys-112 and Cys-209. Gly-137 is a binding site for ATP. Positions 159–161 (KDQ) are interaction with tRNA. The Cysteine persulfide intermediate role is filled by Cys-209.

The protein belongs to the MnmA/TRMU family.

Its subcellular location is the cytoplasm. The catalysed reaction is S-sulfanyl-L-cysteinyl-[protein] + uridine(34) in tRNA + AH2 + ATP = 2-thiouridine(34) in tRNA + L-cysteinyl-[protein] + A + AMP + diphosphate + H(+). In terms of biological role, catalyzes the 2-thiolation of uridine at the wobble position (U34) of tRNA, leading to the formation of s(2)U34. This chain is tRNA-specific 2-thiouridylase MnmA, found in Mycoplasma pneumoniae (strain ATCC 29342 / M129 / Subtype 1) (Mycoplasmoides pneumoniae).